We begin with the raw amino-acid sequence, 226 residues long: Guanylate kinase (226 aa).

Residues 13–193 (GLLLVLSAPS…ALAQLQAIVR (181 aa)) form the Guanylate kinase-like domain. 20–27 (APSGAGKT) is a binding site for ATP.

The protein belongs to the guanylate kinase family.

The protein localises to the cytoplasm. It catalyses the reaction GMP + ATP = GDP + ADP. Functionally, essential for recycling GMP and indirectly, cGMP. The polypeptide is Guanylate kinase (Anaeromyxobacter dehalogenans (strain 2CP-C)).